A 241-amino-acid chain; its full sequence is 1-(5-phosphoribosyl)-5-[(5-phosphoribosylamino)methylideneamino] imidazole-4-carboxamide isomerase (241 aa).

Aspartate 10 functions as the Proton acceptor in the catalytic mechanism. Aspartate 131 serves as the catalytic Proton donor.

This sequence belongs to the HisA/HisF family.

It is found in the cytoplasm. It catalyses the reaction 1-(5-phospho-beta-D-ribosyl)-5-[(5-phospho-beta-D-ribosylamino)methylideneamino]imidazole-4-carboxamide = 5-[(5-phospho-1-deoxy-D-ribulos-1-ylimino)methylamino]-1-(5-phospho-beta-D-ribosyl)imidazole-4-carboxamide. It functions in the pathway amino-acid biosynthesis; L-histidine biosynthesis; L-histidine from 5-phospho-alpha-D-ribose 1-diphosphate: step 4/9. The sequence is that of 1-(5-phosphoribosyl)-5-[(5-phosphoribosylamino)methylideneamino] imidazole-4-carboxamide isomerase from Bifidobacterium longum (strain DJO10A).